The following is an 880-amino-acid chain: DNA mismatch repair protein MutS (880 aa).

605-612 (GPNMSGKS) contacts ATP. Residues 790–829 (QETAAVPSRGVEPPAPVIEPTPAKEQTPVKEQTTPLVEES) are disordered. Over residues 818-829 (VKEQTTPLVEES) the composition is skewed to polar residues.

It belongs to the DNA mismatch repair MutS family.

This protein is involved in the repair of mismatches in DNA. It is possible that it carries out the mismatch recognition step. This protein has a weak ATPase activity. The sequence is that of DNA mismatch repair protein MutS from Limosilactobacillus fermentum (strain NBRC 3956 / LMG 18251) (Lactobacillus fermentum).